The following is a 159-amino-acid chain: FCS-Like Zinc finger 2 (159 aa).

The segment at 75-119 (HFLDSCFLCKKRLGDNRDIFMYRGDTPFCSEECREEQIERDEAKE) adopts an FLZ-type zinc-finger fold. Residues 113–122 (ERDEAKEKKQ) show a composition bias toward basic and acidic residues. The tract at residues 113 to 159 (ERDEAKEKKQSLSTSVKAMRRNEKRSSSSSPTRSRNYAFRTGTVAAA) is disordered.

This sequence belongs to the FLZ family. In terms of assembly, interacts with KIN10 and KIN11 via its FLZ-type zinc finger domain. Interacts with KINB1, KINB2, KINB3 and SNF4 via its N-terminal part. Forms heterodimer with FLZ7, FLZ10, FLZ11, FLZ12, FLZ15, FLZ17 and FLZ18 in vitro.

In terms of biological role, may act as an adapter to facilitate the interaction of SnRK1 complex with effector proteins, conferring tissue- and stimulus-type specific differences in the SnRK1 regulation pathway. This Arabidopsis thaliana (Mouse-ear cress) protein is FCS-Like Zinc finger 2.